The following is a 146-amino-acid chain: 3-hydroxyacyl-[acyl-carrier-protein] dehydratase FabZ (146 aa).

H47 is a catalytic residue.

This sequence belongs to the thioester dehydratase family. FabZ subfamily.

Its subcellular location is the cytoplasm. The catalysed reaction is a (3R)-hydroxyacyl-[ACP] = a (2E)-enoyl-[ACP] + H2O. Functionally, involved in unsaturated fatty acids biosynthesis. Catalyzes the dehydration of short chain beta-hydroxyacyl-ACPs and long chain saturated and unsaturated beta-hydroxyacyl-ACPs. The chain is 3-hydroxyacyl-[acyl-carrier-protein] dehydratase FabZ from Nitrosospira multiformis (strain ATCC 25196 / NCIMB 11849 / C 71).